The chain runs to 108 residues: Tetrahydromethanopterin S-methyltransferase subunit B (108 aa).

Residues 79-99 traverse the membrane as a helical segment; that stretch reads GMFFGFWVTMAILVLVTILAV.

Belongs to the MtrB family. In terms of assembly, the complex is composed of 8 subunits; MtrA, MtrB, MtrC, MtrD, MtrE, MtrF, MtrG and MtrH.

Its subcellular location is the cell membrane. It catalyses the reaction 5-methyl-5,6,7,8-tetrahydromethanopterin + coenzyme M + 2 Na(+)(in) = 5,6,7,8-tetrahydromethanopterin + methyl-coenzyme M + 2 Na(+)(out). It participates in one-carbon metabolism; methanogenesis from CO(2); methyl-coenzyme M from 5,10-methylene-5,6,7,8-tetrahydromethanopterin: step 2/2. Its function is as follows. Part of a complex that catalyzes the formation of methyl-coenzyme M and tetrahydromethanopterin from coenzyme M and methyl-tetrahydromethanopterin. This is an energy-conserving, sodium-ion translocating step. The chain is Tetrahydromethanopterin S-methyltransferase subunit B from Methanococcus maripaludis (strain C7 / ATCC BAA-1331).